Reading from the N-terminus, the 116-residue chain is Methionine-R-sulfoxide reductase B1 (116 aa).

A MsrB domain is found at 1–106 (MSFCSFFGGE…FSSSLKFVPK (106 aa)). Zn(2+)-binding residues include cysteine 23, cysteine 26, cysteine 71, and cysteine 74. The active-site Nucleophile is the selenocysteine 95. Residue selenocysteine 95 is a non-standard amino acid, selenocysteine.

This sequence belongs to the MsrB Met sulfoxide reductase family. Zn(2+) is required as a cofactor. Post-translationally, truncated MSRB1/SEPX1 proteins produced by failed UGA/Sec decoding are ubiquitinated by the CRL2(FEM1C) E3 ubiquitin-protein ligase complex.

It localises to the cytoplasm. The protein resides in the nucleus. It is found in the cytoskeleton. The enzyme catalyses L-methionyl-[protein] + [thioredoxin]-disulfide + H2O = L-methionyl-(R)-S-oxide-[protein] + [thioredoxin]-dithiol. The catalysed reaction is [thioredoxin]-disulfide + L-methionine + H2O = L-methionine (R)-S-oxide + [thioredoxin]-dithiol. Its function is as follows. Methionine-sulfoxide reductase that specifically reduces methionine (R)-sulfoxide back to methionine. While in many cases, methionine oxidation is the result of random oxidation following oxidative stress, methionine oxidation is also a post-translational modification that takes place on specific residue. Acts as a regulator of actin assembly by reducing methionine (R)-sulfoxide mediated by MICALs (MICAL1, MICAL2 or MICAL3) on actin, thereby promoting filament repolymerization. Plays a role in innate immunity by reducing oxidized actin, leading to actin repolymerization in macrophages. The protein is Methionine-R-sulfoxide reductase B1 (Msrb1) of Mus musculus (Mouse).